The chain runs to 186 residues: ATP synthase subunit delta, chloroplastic (186 aa).

It belongs to the ATPase delta chain family. F-type ATPases have 2 components, F(1) - the catalytic core - and F(0) - the membrane proton channel. F(1) has five subunits: alpha(3), beta(3), gamma(1), delta(1), epsilon(1). CF(0) has four main subunits: a(1), b(1), b'(1) and c(10-14). The alpha and beta chains form an alternating ring which encloses part of the gamma chain. F(1) is attached to F(0) by a central stalk formed by the gamma and epsilon chains, while a peripheral stalk is formed by the delta, b and b' chains.

The protein localises to the plastid. It localises to the chloroplast thylakoid membrane. Its function is as follows. F(1)F(0) ATP synthase produces ATP from ADP in the presence of a proton or sodium gradient. F-type ATPases consist of two structural domains, F(1) containing the extramembraneous catalytic core and F(0) containing the membrane proton channel, linked together by a central stalk and a peripheral stalk. During catalysis, ATP synthesis in the catalytic domain of F(1) is coupled via a rotary mechanism of the central stalk subunits to proton translocation. In terms of biological role, this protein is part of the stalk that links CF(0) to CF(1). It either transmits conformational changes from CF(0) to CF(1) or is implicated in proton conduction. The chain is ATP synthase subunit delta, chloroplastic from Porphyra purpurea (Red seaweed).